The primary structure comprises 709 residues: MRFLLRLPQIHFRKLSCSMSVLMGSKQFLEFCLLPSFASYPSSPSYSSSRQVSSVSRRFRPVLASRPVSKNSPYYQRTNGLSSYNSIPRVPTPVDTEVEADKRVVLSRLVTLRRKLAEQGVDAENCPPGQHSGLICPTCEGGNSGEKSLSLFIAPDGSSATWNCFRGKCGLKGGVRADGGLASADPIEKVERKITVEGIELEPLCDEIQDYFAARAISRKTLERNRVMQKRIGDEIVIAFTYWQRGELVSCKYRSLTKMFFQERKTRRILYGLDDIEKTSEVIIVEGEIDKLAMEEAGFLNCVSVPDGAPAKVSSKEIPSEDKDTKYKFLWNCNDYLKKASRIVIATDGDGPGQAMAEEIARRLGKERCWRVKWPKKSEDEHFKDANEVLMSKGPHLLKEAILDAEPYPILGLFSFKDFFDEIDAYYDRTHGHEYGVSTGWKNLDNLYSVVPGELTVVTGIPNSGKSEWIDAMLCNLNHSVGWKFALCSMENKVRDHARKLLEKHIKKPFFDADYGRSVQRMSVEEKDEGKKWLNDTFYPIRCEMDSLPSIDWVLERAKAAVLRYGIRGLVIDPYNELDHQRTPRQTETEYVSQMLTKIKRFSQHHSCHVWFVAHPKQLQHWDGGAPNLYDISGSAHFINKCDNGIIVHRNRDENAGPLDLVQIGVRKVRNKVAGQIGDAYLCYDRTTGSYSDSPVTPGMPERRSPKRY.

The transit peptide at 1 to 16 directs the protein to the chloroplast and mitochondrion; sequence MRFLLRLPQIHFRKLS. Residues 280 to 385 form the Toprim domain; sequence SEVIIVEGEI…KKSEDEHFKD (106 aa). Mg(2+) contacts are provided by Glu286, Asp348, and Asp350. In terms of domain architecture, SF4 helicase spans 430 to 698; it reads THGHEYGVST…GSYSDSPVTP (269 aa). 460 to 467 contacts ATP; it reads GIPNSGKS.

It depends on Mg(2+) as a cofactor. In terms of tissue distribution, expressed in young leaves and shoot apex tissues. Detected in developing tissues such as cotyledons, sepals, pistils and inflorescences. Nearly undetectable in mature leaves.

The protein resides in the plastid. Its subcellular location is the chloroplast. The protein localises to the mitochondrion. The enzyme catalyses ATP + H2O = ADP + phosphate + H(+). Its function is as follows. Has both DNA primase and DNA helicase activities and may be involved in organelle DNA replication. Capable of producing RNA primers of 9 to 18 bases from a single-stranded DNA template. This Arabidopsis thaliana (Mouse-ear cress) protein is Twinkle homolog protein, chloroplastic/mitochondrial.